The chain runs to 168 residues: Transcription elongation factor GreB (168 aa).

The protein belongs to the GreA/GreB family. GreB subfamily.

Necessary for efficient RNA polymerase transcription elongation past template-encoded arresting sites. The arresting sites in DNA have the property of trapping a certain fraction of elongating RNA polymerases that pass through, resulting in locked ternary complexes. Cleavage of the nascent transcript by cleavage factors such as GreA or GreB allows the resumption of elongation from the new 3'terminus. GreB releases sequences of up to 9 nucleotides in length. This chain is Transcription elongation factor GreB, found in Xanthomonas axonopodis pv. citri (strain 306).